The sequence spans 787 residues: Ribonucleoside-diphosphate reductase large subunit (787 aa).

Residues threonine 209, 224 to 225, glycine 255, 436 to 440, and 618 to 622 each bind substrate; these read SC, NLCTE, and PTVSS. The cysteines at positions 225 and 453 are disulfide-linked. Asparagine 436 functions as the Proton acceptor in the catalytic mechanism. The active-site Cysteine radical intermediate is cysteine 438. Catalysis depends on glutamate 440, which acts as the Proton acceptor.

Belongs to the ribonucleoside diphosphate reductase large chain family. Heterotetramer composed of a homodimer of the large subunit (R1) and a homodimer of the small subunit (R2). Larger multisubunit protein complex are also active, composed of (R1)n(R2)n.

It carries out the reaction a 2'-deoxyribonucleoside 5'-diphosphate + [thioredoxin]-disulfide + H2O = a ribonucleoside 5'-diphosphate + [thioredoxin]-dithiol. Its function is as follows. Ribonucleoside-diphosphate reductase holoenzyme provides the precursors necessary for viral DNA synthesis. Allows virus growth in non-dividing cells, as well as reactivation from latency in infected hosts. Catalyzes the biosynthesis of deoxyribonucleotides from the corresponding ribonucleotides. The sequence is that of Ribonucleoside-diphosphate reductase large subunit from Bos taurus (Bovine).